A 234-amino-acid polypeptide reads, in one-letter code: 7-cyano-7-deazaguanine synthase (234 aa).

Position 13 to 23 (13 to 23 (LSGGQDSTTCL)) interacts with ATP. Cysteine 193, cysteine 201, cysteine 204, and cysteine 207 together coordinate Zn(2+).

Belongs to the QueC family. Requires Zn(2+) as cofactor.

The catalysed reaction is 7-carboxy-7-deazaguanine + NH4(+) + ATP = 7-cyano-7-deazaguanine + ADP + phosphate + H2O + H(+). It participates in purine metabolism; 7-cyano-7-deazaguanine biosynthesis. Catalyzes the ATP-dependent conversion of 7-carboxy-7-deazaguanine (CDG) to 7-cyano-7-deazaguanine (preQ(0)). The chain is 7-cyano-7-deazaguanine synthase from Chromobacterium violaceum (strain ATCC 12472 / DSM 30191 / JCM 1249 / CCUG 213 / NBRC 12614 / NCIMB 9131 / NCTC 9757 / MK).